Reading from the N-terminus, the 290-residue chain is UPF0761 membrane protein YihY (290 aa).

6 helical membrane passes run 44-64, 104-124, 140-160, 183-203, 210-230, and 244-264; these read LLSL…FPMF, VGAC…DSAL, FAVY…SLAI, IFPL…VPTI, AIVG…GFAL, and VLAV…IVLL.

Belongs to the UPF0761 family.

The protein localises to the cell inner membrane. The chain is UPF0761 membrane protein YihY from Shigella sonnei (strain Ss046).